Consider the following 1217-residue polypeptide: Splicing factor 3B subunit 3 (1217 aa).

Interaction with PHF5A, SF3B1 and SF3B5 regions lie at residues 105–119 (ETFGKSGCRRIVPGQ) and 145–168 (NRDAAARLTISSPLEAHKANTLVY). Ser-156 is modified (phosphoserine). Interaction with SF3B1 and SF3B5 regions lie at residues 193 to 231 (DNDPTGEAAANTQQTLTFYELDLGLNHVVRKYSEPLEEH) and 786 to 804 (RKFVIHPESNNLIIIETDH). The interval 1028-1049 (TYPRWVTTASLLDYDTVAGADK) is interaction with SF3B1. An interaction with SF3B5 region spans residues 1100-1123 (TVLSLQKTTLIPGGSESLVYTTLS). Thr-1200 carries the post-translational modification Phosphothreonine.

This sequence belongs to the RSE1 family. In terms of assembly, component of the 17S U2 SnRNP complex, a ribonucleoprotein complex that contains small nuclear RNA (snRNA) U2 and a number of specific proteins. Part of the SF3B subcomplex of the 17S U2 SnRNP complex. SF3B associates with the splicing subcomplex SF3A and a 12S RNA unit to form the U2 small nuclear ribonucleoproteins complex (U2 snRNP). Within the SF3B subcomplex, interacts directly with SF3B1 (via HEAT domain), SF3B5 and PHF5A. Identified in the spliceosome A complex; remains associated with the spliceosome throughout the splicing process. Component of the spliceosome B complex. Identified in the spliceosome C complex. Identified in the spliceosome E complex. Component of the minor (U12-type spliceosome) spliceosome. Within this complex, interacts with SCNM1. Associates with the STAGA transcription coactivator-HAT complex. Interacts with SUPT3H. Interacts with TAF3.

Its subcellular location is the nucleus. In terms of biological role, component of the 17S U2 SnRNP complex of the spliceosome, a large ribonucleoprotein complex that removes introns from transcribed pre-mRNAs. The 17S U2 SnRNP complex (1) directly participates in early spliceosome assembly and (2) mediates recognition of the intron branch site during pre-mRNA splicing by promoting the selection of the pre-mRNA branch-site adenosine, the nucleophile for the first step of splicing. Within the 17S U2 SnRNP complex, SF3B3 is part of the SF3B subcomplex, which is required for 'A' complex assembly formed by the stable binding of U2 snRNP to the branchpoint sequence in pre-mRNA. Sequence independent binding of SF3A and SF3B subcomplexes upstream of the branch site is essential, it may anchor U2 snRNP to the pre-mRNA. May also be involved in the assembly of the 'E' complex. Also acts as a component of the minor spliceosome, which is involved in the splicing of U12-type introns in pre-mRNAs. The protein is Splicing factor 3B subunit 3 (SF3B3) of Pongo abelii (Sumatran orangutan).